We begin with the raw amino-acid sequence, 205 residues long: Ribosome maturation factor RimP (205 aa).

It belongs to the RimP family.

It is found in the cytoplasm. Its function is as follows. Required for maturation of 30S ribosomal subunits. The protein is Ribosome maturation factor RimP of Sinorhizobium fredii (strain NBRC 101917 / NGR234).